The sequence spans 81 residues: Large ribosomal subunit protein bL31 (81 aa).

Positions 16, 18, 36, and 39 each coordinate Zn(2+).

Belongs to the bacterial ribosomal protein bL31 family. Type A subfamily. As to quaternary structure, part of the 50S ribosomal subunit. Zn(2+) serves as cofactor.

In terms of biological role, binds the 23S rRNA. This chain is Large ribosomal subunit protein bL31, found in Rhodopirellula baltica (strain DSM 10527 / NCIMB 13988 / SH1).